The chain runs to 168 residues: Ribosome maturation factor RimP (168 aa).

Belongs to the RimP family.

Its subcellular location is the cytoplasm. Required for maturation of 30S ribosomal subunits. This is Ribosome maturation factor RimP from Syntrophobacter fumaroxidans (strain DSM 10017 / MPOB).